The following is a 353-amino-acid chain: Replication factor C subunit 2 (353 aa).

Met1 bears the N-acetylmethionine mark. ATP contacts are provided by residues Val28, Arg32, 65-73 (GPPGTGKTS), Asn171, and Arg229.

Belongs to the activator 1 small subunits family. As to quaternary structure, replication factor C (RFC) is a heteropentamer of subunits RFC1, RFC2, RFC3, RFC4 and RFC5 and forms a complex with POL30/PCNA in the presence of ATP. Component of the RAD24-RFC complex which consists of RAD14, RFC2, RFC3, RFC4 and RFC5 and associates with the checkpoint clamp DDC1:MEC3:RAD17 complex. Component of the ELG1-RFC complex which consists of ELG1, RFC2, RFC3, RFC4 and RFC5. Component of the CTF18-RFC complex, which consists of CTF18, CTF8, DCC1, RFC2, RFC3, RFC4 and RFC5. RFC2 interacts with ECO1.

It localises to the nucleus. Component of ATP-dependent clamp loader (RFC and RFC-like) complexes for DNA clamps, such as the POL30/PCNA homotrimer and the checkpoint clamp DDC1:MEC3:RAD17 complex. During a clamp loading circle, the RFC:clamp complex binds to DNA and the recognition of the double-stranded/single-stranded junction stimulates ATP hydrolysis by RFC. The complex presumably provides bipartite ATP sites in which one subunit supplies a catalytic site for hydrolysis of ATP bound to the neighboring subunit. Dissociation of RFC from the clamp leaves the clamp encircling DNA. Component of the replication factor C (RFC or activator 1) complex which loads POL30/PCNA and acts during elongation of primed DNA templates by DNA polymerase delta and epsilon. RFC has an essential but redundant activity in sister chromatid cohesion establishment. Component of the RFC-like complex CTF18-RFC which is required for efficient establishment of chromosome cohesion during S-phase and may load or unload POL30/PCNA. Component of the RFC-like RAD24-RFC complex which loads the checkpoint clamp DDC1:MEC3:RAD17 complex and is involved in DNA repair pathways. Component of the RFC-like ELG1-RFC complex which appears to have a role in DNA replication, replication fork re-start, recombination and repair. RFC2 binds ATP and single-stranded DNA. This Saccharomyces cerevisiae (strain ATCC 204508 / S288c) (Baker's yeast) protein is Replication factor C subunit 2 (RFC2).